The sequence spans 472 residues: Eukaryotic translation initiation factor 2 subunit 3 (472 aa).

N-acetylalanine; partial is present on Ala-2. Positions 39 to 247 (QATINIGTIG…YIVKKIPVPL (209 aa)) constitute a tr-type G domain. Residues 48-55 (GHVAHGKS) are G1. Position 51–56 (51–56 (AHGKST)) interacts with GTP. Residues 76–80 (NITIK) form a G2 region. A G3 region spans residues 134-137 (DCPG). Residues 190-193 (NKID) and 225-227 (SAQ) contribute to the GTP site. The tract at residues 190-193 (NKID) is G4. The segment at 225–227 (SAQ) is G5. The tract at residues 457 to 469 (GQIRRGVTIKPTV) is interacts with CDC123.

Belongs to the TRAFAC class translation factor GTPase superfamily. Classic translation factor GTPase family. EIF2G subfamily. Eukaryotic translation initiation factor 2 eIF2 is a heterotrimeric complex composed of an alpha (EIF2S1), a beta (EIF2S2) and a gamma (EIF2S3) chain. eIF2 is member of the 43S pre-initiation complex (43S PIC).

It localises to the cytoplasm. Its subcellular location is the cytosol. The catalysed reaction is GTP + H2O = GDP + phosphate + H(+). Its function is as follows. Member of the eIF2 complex that functions in the early steps of protein synthesis by forming a ternary complex with GTP and initiator tRNA. This complex binds to a 40S ribosomal subunit, followed by mRNA binding to form the 43S pre-initiation complex (43S PIC). Junction of the 60S ribosomal subunit to form the 80S initiation complex is preceded by hydrolysis of the GTP bound to eIF2 and release of an eIF2-GDP binary complex. In order for eIF2 to recycle and catalyze another round of initiation, the GDP bound to eIF2 must exchange with GTP by way of a reaction catalyzed by eIF-2B. In Gallus gallus (Chicken), this protein is Eukaryotic translation initiation factor 2 subunit 3 (EIF2S3).